A 201-amino-acid chain; its full sequence is Cold shock domain-containing protein 4 (201 aa).

Ser-2 is subject to N-acetylserine. A CSD domain is found at Arg-14–Pro-81. A disordered region spans residues Glu-66–Gly-109. The segment covering Asn-89–Gly-109 has biased composition (gly residues). CCHC-type zinc fingers lie at residues Asn-136 to Gln-153 and Leu-180 to Ser-197.

This sequence belongs to the cold shock protein (CSP) family. As to expression, mostly expressed in shoot apices and siliques, and, to a lower extent, in roots, cotyledons, stems, shoots, leaves, floral buds and flowers. Present in shoot apical meristems and siliques (at protein level). Very low levels are observed in cv. Landsberg erecta compared to cv. Columbia.

It localises to the cytoplasm. The protein resides in the nucleus. Its subcellular location is the nucleolus. Chaperone that binds to and unwinds RNA and both single-stranded DNA and double-stranded DNA (ssDNA and dsDNA DNA). Regulates the flowering transition and flower and seed development, particularly at late stages of embryo development, through regulation of gene expression (including MEA, FIS2, AP1, CAL, AG and SHP2). The sequence is that of Cold shock domain-containing protein 4 (CSP4) from Arabidopsis thaliana (Mouse-ear cress).